A 71-amino-acid polypeptide reads, in one-letter code: Heat-stable enterotoxin A (71 aa).

A signal peptide spans 1-19 (MKKIVFVLVLMLSSFGAFG). A propeptide spanning residues 20–53 (QETVSGQFSDALSTPITAEVYKQACDPPLPPAEV) is cleaved from the precursor. 3 disulfides stabilise this stretch: Cys-59–Cys-64, Cys-60–Cys-68, and Cys-63–Cys-71.

Belongs to the heat-stable enterotoxin family.

The protein resides in the secreted. In terms of biological role, toxin which activates the particulate form of guanylate cyclase and increases cyclic GMP levels within the host intestinal epithelial cells. The polypeptide is Heat-stable enterotoxin A (ystA) (Yersinia enterocolitica).